Here is a 657-residue protein sequence, read N- to C-terminus: Replication restart protein PriA (657 aa).

The region spanning 143 to 309 is the Helicase ATP-binding domain; sequence ITASTGARSF…LRGAVRRLPL (167 aa). 156-163 is a binding site for ATP; that stretch reads GVTGSGKT. Positions 252-255 match the DEAH box motif; it reads DEEH. Cysteine 366, cysteine 369, cysteine 375, cysteine 378, cysteine 393, cysteine 396, cysteine 406, and cysteine 409 together coordinate Zn(2+). One can recognise a Helicase C-terminal domain in the interval 390 to 570; sequence AMQCHYCGRQ…PFVRLIRFVF (181 aa).

The protein belongs to the helicase family. PriA subfamily. As to quaternary structure, component of the replication restart primosome. Zn(2+) serves as cofactor.

It carries out the reaction Couples ATP hydrolysis with the unwinding of duplex DNA by translocating in the 3'-5' direction.. The enzyme catalyses ATP + H2O = ADP + phosphate + H(+). Initiates the restart of stalled replication forks, which reloads the replicative helicase on sites other than the origin of replication. Recognizes and binds to abandoned replication forks and remodels them to uncover a helicase loading site. Promotes assembly of the primosome at these replication forks. This Treponema pallidum (strain Nichols) protein is Replication restart protein PriA.